The primary structure comprises 151 residues: Small heat shock protein HspD (151 aa).

A sHSP domain is found at 28-138 (RATEDNYPPY…KPRRIAINGA (111 aa)).

It belongs to the small heat shock protein (HSP20) family.

The polypeptide is Small heat shock protein HspD (hspD) (Bradyrhizobium diazoefficiens (strain JCM 10833 / BCRC 13528 / IAM 13628 / NBRC 14792 / USDA 110)).